Here is a 194-residue protein sequence, read N- to C-terminus: Cysteine and glycine-rich protein 3 (194 aa).

The interaction with TCAP stretch occupies residues 1–5; the sequence is MPNWG. Residues 10 to 61 enclose the LIM zinc-binding 1 domain; it reads CGACDKTVYHAEEIQCNGRSFHKTCFHCMACRKALDSTTVAAHESEIYCKVC. Residues 64–69 carry the Nuclear localization signal motif; the sequence is RKYGPK. Residues 94–105 form an interaction with CLF2 region; it reads QSPKPARAATTS. Residues serine 95, serine 111, and serine 153 each carry the phosphoserine modification. In terms of domain architecture, LIM zinc-binding 2 spans 120-171; it reads CPRCGKSVYAAEKVMGGGKPWHKTCFPCAICGKSLESTNVTDKDGELYCKVC.

As to quaternary structure, self-associates. Oligomeric in the cytoplasm and monomeric in the nucleus. Homooligomers preferentially form along the actin cytoskeleton. Interacts with TCAP, ACTN2 and NRAP. Interacts with LDHD, SPTB, MYOD1, MYOG, MYF6. Interacts with GLRX3 (via C-terminus); GLRX3 and calcineurin compete for interaction with CSRP3. Interacts with CFL2; the stoichiometry influences F-actin depolymerization and possibly two molecules of CFL2 can interact with one molecule of CSRP3 resulting in the highest functional impact; the interaction is stronger with phosphorylated CFL2. Post-translationally, phosphorylated by PKC/PRKCA. High in striated muscle and adult heart.

It is found in the nucleus. Its subcellular location is the cytoplasm. The protein resides in the cytoskeleton. The protein localises to the myofibril. It localises to the sarcomere. It is found in the z line. In terms of biological role, positive regulator of myogenesis. Acts as a cofactor for myogenic bHLH transcription factors such as MYOD1, and probably MYOG and MYF6. Enhances the DNA-binding activity of the MYOD1:TCF3 isoform E47 complex and may promote formation of a functional MYOD1:TCF3 isoform E47:MEF2A complex involved in myogenesis. Plays a crucial and specific role in the organization of cytosolic structures in cardiomyocytes. Could play a role in mechanical stretch sensing. May be a scaffold protein that promotes the assembly of interacting proteins at Z-line structures. It is essential for calcineurin anchorage to the Z line. Required for stress-induced calcineurin-NFAT activation. The role in regulation of cytoskeleton dynamics by association with CFL2 is reported conflictingly. Proposed to contribute to the maintenance of muscle cell integrity through an actin-based mechanism. Can directly bind to actin filaments, cross-link actin filaments into bundles without polarity selectivity and protect them from dilution- and cofilin-mediated depolymerization; the function seems to involve its self-association. In vitro can inhibit PKC/PRKCA activity. Proposed to be involved in cardiac stress signaling by down-regulating excessive PKC/PRKCA signaling. This Rattus norvegicus (Rat) protein is Cysteine and glycine-rich protein 3 (Csrp3).